Reading from the N-terminus, the 126-residue chain is Large ribosomal subunit protein bL20c (126 aa).

The protein belongs to the bacterial ribosomal protein bL20 family.

Its subcellular location is the plastid. It localises to the chloroplast. Binds directly to 23S ribosomal RNA and is necessary for the in vitro assembly process of the 50S ribosomal subunit. It is not involved in the protein synthesizing functions of that subunit. This chain is Large ribosomal subunit protein bL20c, found in Pelargonium hortorum (Common geranium).